Reading from the N-terminus, the 1578-residue chain is BRD4-interacting chromatin-remodeling complex-associated protein (1578 aa).

Disordered stretches follow at residues 80-101 (DILG…DQPC), 631-673 (PAVT…PSLA), and 725-951 (IVSA…PPPR). The span at 86–96 (AAGGGGGGGGA) shows a compositional bias: gly residues. Composition is skewed to low complexity over residues 631–662 (PAVT…TQPQ) and 764–782 (IPAA…PSLP). Pro residues-rich tracts occupy residues 793–816 (MPSP…PPSQ), 824–841 (PSEP…PPTL), and 865–888 (PGPP…PASH). Low complexity predominate over residues 889-906 (LPPASTPSAVASSSEPSA). At Ser929 the chain carries Phosphoserine. Residue Thr931 is modified to Phosphothreonine. Positions 942 to 951 (PTAPPPPPPR) are enriched in pro residues. Lys1067 is subject to N6-acetyllysine. Residues 1206–1316 (EKPDEYVSSS…NRPPIKTYEA (111 aa)) are disordered. Composition is skewed to low complexity over residues 1233-1247 (SHGQ…GTSA) and 1275-1294 (ASSS…AASS). A Glycyl lysine isopeptide (Lys-Gly) (interchain with G-Cter in SUMO2) cross-link involves residue Lys1327. Disordered stretches follow at residues 1342 to 1435 (DPVH…PTKV) and 1457 to 1578 (VLKG…TLNR). Pro residues predominate over residues 1346–1370 (QPLPAPTPAKGAEPPPHPAPPPLPP). At Ser1427 the chain carries Phosphoserine. Polar residues predominate over residues 1502 to 1532 (ASFSSDSPQDDTLTEHLQSAIDSILNLQQAP). Pro residues predominate over residues 1538–1553 (GPYPHTGPTPGTPTSP).

As to quaternary structure, component of the multiprotein chromatin-remodeling complexes SWI/SNF: SWI/SNF-A (BAF), SWI/SNF-B (PBAF) and related complexes. The canonical complex contains a catalytic subunit (either SMARCA4/BRG1/BAF190A or SMARCA2/BRM/BAF190B) and at least SMARCE1, ACTL6A/BAF53, SMARCC1/BAF155, SMARCC2/BAF170, and SMARCB1/SNF5/BAF47. Other subunits specific to each of the complexes may also be present permitting several possible combinations developmentally and tissue specific. Component of the SWI/SNF (GBAF) subcomplex, which includes at least BICRA or BICRAL (mutually exclusive), BRD9, SS18, the core BAF subunits, SMARCA2/BRM, SMARCA4/BRG1/BAF190A, ACTL6A/BAF53, SMARCC1/BAF155, and SMARCD1/BAF60A. Interacts with BRD4; the interaction bridges BRD4 to the GBAF complex.

Its subcellular location is the nucleus. Component of SWI/SNF chromatin remodeling subcomplex GBAF that carries out key enzymatic activities, changing chromatin structure by altering DNA-histone contacts within a nucleosome in an ATP-dependent manner. May play a role in BRD4-mediated gene transcription. This Mus musculus (Mouse) protein is BRD4-interacting chromatin-remodeling complex-associated protein.